A 206-amino-acid chain; its full sequence is Large ribosomal subunit protein uL4 (206 aa).

The interval 46–95 (GNRAQKTRAEVKHSTKKPWRQKGTGRARSGMTSSPLWRKGGRAFPNKPDE) is disordered. The span at 59–70 (STKKPWRQKGTG) shows a compositional bias: basic residues.

It belongs to the universal ribosomal protein uL4 family. In terms of assembly, part of the 50S ribosomal subunit.

In terms of biological role, one of the primary rRNA binding proteins, this protein initially binds near the 5'-end of the 23S rRNA. It is important during the early stages of 50S assembly. It makes multiple contacts with different domains of the 23S rRNA in the assembled 50S subunit and ribosome. Functionally, forms part of the polypeptide exit tunnel. The sequence is that of Large ribosomal subunit protein uL4 from Neisseria meningitidis serogroup C (strain 053442).